A 368-amino-acid chain; its full sequence is UDP-N-acetylglucosamine--N-acetylmuramyl-(pentapeptide) pyrophosphoryl-undecaprenol N-acetylglucosamine transferase (368 aa).

UDP-N-acetyl-alpha-D-glucosamine-binding positions include 10–12 (TGG), asparagine 124, serine 196, isoleucine 251, and glutamine 296.

This sequence belongs to the glycosyltransferase 28 family. MurG subfamily.

It localises to the cell membrane. It catalyses the reaction Mur2Ac(oyl-L-Ala-gamma-D-Glu-L-Lys-D-Ala-D-Ala)-di-trans,octa-cis-undecaprenyl diphosphate + UDP-N-acetyl-alpha-D-glucosamine = beta-D-GlcNAc-(1-&gt;4)-Mur2Ac(oyl-L-Ala-gamma-D-Glu-L-Lys-D-Ala-D-Ala)-di-trans,octa-cis-undecaprenyl diphosphate + UDP + H(+). It functions in the pathway cell wall biogenesis; peptidoglycan biosynthesis. In terms of biological role, cell wall formation. Catalyzes the transfer of a GlcNAc subunit on undecaprenyl-pyrophosphoryl-MurNAc-pentapeptide (lipid intermediate I) to form undecaprenyl-pyrophosphoryl-MurNAc-(pentapeptide)GlcNAc (lipid intermediate II). This Limosilactobacillus fermentum (strain NBRC 3956 / LMG 18251) (Lactobacillus fermentum) protein is UDP-N-acetylglucosamine--N-acetylmuramyl-(pentapeptide) pyrophosphoryl-undecaprenol N-acetylglucosamine transferase.